We begin with the raw amino-acid sequence, 381 residues long: Alkanesulfonate monooxygenase (381 aa).

It belongs to the SsuD family. As to quaternary structure, homotetramer.

It carries out the reaction an alkanesulfonate + FMNH2 + O2 = an aldehyde + FMN + sulfite + H2O + 2 H(+). Catalyzes the desulfonation of aliphatic sulfonates. The polypeptide is Alkanesulfonate monooxygenase (Escherichia coli O157:H7).